A 118-amino-acid chain; its full sequence is RxLR effector protein PITG_19617 (118 aa).

The first 21 residues, 1-21 (MRAVYILAMACAATLQASSSA), serve as a signal peptide directing secretion. The RxLR-dEER motif lies at 50–64 (RLLRVEDKEEETEEE).

The protein belongs to the RxLR effector family.

Its subcellular location is the secreted. It is found in the host nucleus. It localises to the host cytoplasm. In terms of biological role, effector that enhances P.infestans colonization of Nicotiana benthamiana leaves. The polypeptide is RxLR effector protein PITG_19617 (Phytophthora infestans (strain T30-4) (Potato late blight agent)).